Here is a 77-residue protein sequence, read N- to C-terminus: Small ribosomal subunit protein bS18 (77 aa).

This sequence belongs to the bacterial ribosomal protein bS18 family. In terms of assembly, part of the 30S ribosomal subunit. Forms a tight heterodimer with protein bS6.

In terms of biological role, binds as a heterodimer with protein bS6 to the central domain of the 16S rRNA, where it helps stabilize the platform of the 30S subunit. In Halalkalibacterium halodurans (strain ATCC BAA-125 / DSM 18197 / FERM 7344 / JCM 9153 / C-125) (Bacillus halodurans), this protein is Small ribosomal subunit protein bS18.